The following is a 239-amino-acid chain: tRNA (guanine-N(7)-)-methyltransferase (239 aa).

Glutamate 69, glutamate 94, aspartate 121, and aspartate 144 together coordinate S-adenosyl-L-methionine. Aspartate 144 is a catalytic residue. Residue lysine 148 coordinates substrate. Residues 150-155 form an interaction with RNA region; sequence RHNKRR. Substrate is bound by residues aspartate 180 and 217-220; that span reads TKFE.

The protein belongs to the class I-like SAM-binding methyltransferase superfamily. TrmB family. In terms of assembly, monomer.

The enzyme catalyses guanosine(46) in tRNA + S-adenosyl-L-methionine = N(7)-methylguanosine(46) in tRNA + S-adenosyl-L-homocysteine. The protein operates within tRNA modification; N(7)-methylguanine-tRNA biosynthesis. Catalyzes the formation of N(7)-methylguanine at position 46 (m7G46) in tRNA. This is tRNA (guanine-N(7)-)-methyltransferase from Shigella flexneri serotype 5b (strain 8401).